The following is a 522-amino-acid chain: Perilipin-1 (522 aa).

Phosphoserine is present on S81. At T85 the chain carries Phosphothreonine. A phosphoserine mark is found at S126, S130, S132, S137, and S174. 2 disordered regions span residues 195–217 (DKEE…AKPS) and 287–318 (LAAA…EENK). The segment covering 291-314 (QEEDHEDQTDTEGEDTEEEEELET) has biased composition (acidic residues). The interval 291–319 (QEEDHEDQTDTEGEDTEEEEELETEENKF) is required for interaction with CIDEC. 2 positions are modified to phosphothreonine: T299 and T301. Phosphoserine is present on residues S382, S384, and S408. Residues 413–522 (ESEFRDIDNP…THYSQLRKKS (110 aa)) are disordered. The span at 414 to 435 (SEFRDIDNPPAEVERREAERRA) shows a compositional bias: basic and acidic residues. 3 positions are modified to phosphoserine: S436, S497, and S499.

The protein belongs to the perilipin family. Interacts with ABHD5. Interacts with CIDEC. Interacts with AQP7. Post-translationally, major cAMP-dependent protein kinase-substrate in adipocytes, also dephosphorylated by PP1. When phosphorylated, may be maximally sensitive to HSL and when unphosphorylated, may play a role in the inhibition of lipolysis, by acting as a barrier in lipid droplet. As to expression, detected in adipocytes from white adipose tissue (at protein level). Detected in visceral adipose tissue and mammary gland.

The protein resides in the endoplasmic reticulum. It is found in the lipid droplet. Modulator of adipocyte lipid metabolism. Coats lipid storage droplets to protect them from breakdown by hormone-sensitive lipase (HSL). Its absence may result in leanness. Plays a role in unilocular lipid droplet formation by activating CIDEC. Their interaction promotes lipid droplet enlargement and directional net neutral lipid transfer. May modulate lipolysis and triglyceride levels. In Homo sapiens (Human), this protein is Perilipin-1 (PLIN1).